Reading from the N-terminus, the 172-residue chain is C-phycocyanin beta chain (172 aa).

The residue at position 72 (N72) is an N4-methylasparagine. Residues C82 and C153 each contribute to the (2R,3E)-phycocyanobilin site.

The protein belongs to the phycobiliprotein family. Heterodimer of an alpha and a beta subunit, which further assembles into trimers and the trimers into hexamers. The basic functional unit of phycobiliproteins is a ring-shaped hexamer formed from two back-to-back trimers contacting via the alpha chain subunits. The trimers are composed of alpha/beta subunit heterodimers arranged around a three-fold axis of symmetry. The phycoerythrins also contain a gamma subunit which is located in the center of the hexamer. Contains two covalently linked bilin chromophores.

It localises to the plastid. Its subcellular location is the chloroplast thylakoid membrane. Functionally, light-harvesting photosynthetic bile pigment-protein from the phycobiliprotein complex (phycobilisome, PBS). Phycocyanin is the major phycobiliprotein in the PBS rod. The polypeptide is C-phycocyanin beta chain (cpcB) (Porphyra purpurea (Red seaweed)).